Reading from the N-terminus, the 381-residue chain is MTTTDPVQLTADLVRCPSVTPTEGGALVLLERLLTDAGFSCTRVDRGEVCNLFARWGDKAHARTFGFNGHTDVVPIGDEAAWTHDPFGAEIVEGVMYGRGTTDMKSGVAAFAAAAIDFVQDTPPDGAVVLTITGDEEGDAVDGTTALLDYMDAAGEKMSVCLVGEPTCPNHMGEMIKIGRRGSMTAWFTVTGVQGHSAYPHRANNPMNGLARLMDRLGSHQLDEGSEHFDASTLAIVTIDTGNPATNVIPAQGRAAVNIRFNDLHSGASLTDWLQGEADKVAKEFGLEVDMKVQISGESFITPPGDLSDLVSRAVQTETNQAPELSTTGGTSDARFVKSHCPVVEFGLVGKTMHQVDENVDVAHIHQLKSIYSRILKDYFS.

His-70 serves as a coordination point for Zn(2+). The active site involves Asp-72. A Zn(2+)-binding site is contributed by Asp-103. Glu-136 (proton acceptor) is an active-site residue. Residues Glu-137, Glu-165, and His-354 each coordinate Zn(2+).

It belongs to the peptidase M20A family. DapE subfamily. Homodimer. Zn(2+) is required as a cofactor. Requires Co(2+) as cofactor.

It catalyses the reaction N-succinyl-(2S,6S)-2,6-diaminopimelate + H2O = (2S,6S)-2,6-diaminopimelate + succinate. The protein operates within amino-acid biosynthesis; L-lysine biosynthesis via DAP pathway; LL-2,6-diaminopimelate from (S)-tetrahydrodipicolinate (succinylase route): step 3/3. Catalyzes the hydrolysis of N-succinyl-L,L-diaminopimelic acid (SDAP), forming succinate and LL-2,6-diaminopimelate (DAP), an intermediate involved in the bacterial biosynthesis of lysine and meso-diaminopimelic acid, an essential component of bacterial cell walls. The sequence is that of Succinyl-diaminopimelate desuccinylase 1 from Ruegeria sp. (strain TM1040) (Silicibacter sp.).